Consider the following 354-residue polypeptide: tRNA N6-adenosine threonylcarbamoyltransferase (354 aa).

2 residues coordinate Fe cation: His115 and His119. Residues 138–142 (LVSGG), Asp171, Gly184, and Asn276 each bind substrate. Residue Asp304 coordinates Fe cation.

It belongs to the KAE1 / TsaD family. Requires Fe(2+) as cofactor.

Its subcellular location is the cytoplasm. It carries out the reaction L-threonylcarbamoyladenylate + adenosine(37) in tRNA = N(6)-L-threonylcarbamoyladenosine(37) in tRNA + AMP + H(+). In terms of biological role, required for the formation of a threonylcarbamoyl group on adenosine at position 37 (t(6)A37) in tRNAs that read codons beginning with adenine. Is involved in the transfer of the threonylcarbamoyl moiety of threonylcarbamoyl-AMP (TC-AMP) to the N6 group of A37, together with TsaE and TsaB. TsaD likely plays a direct catalytic role in this reaction. The protein is tRNA N6-adenosine threonylcarbamoyltransferase of Xanthomonas campestris pv. campestris (strain 8004).